Reading from the N-terminus, the 250-residue chain is Ubiquinone/menaquinone biosynthesis C-methyltransferase UbiE (250 aa).

Residues T73, D94, 122–123, and S139 contribute to the S-adenosyl-L-methionine site; that span reads NA.

Belongs to the class I-like SAM-binding methyltransferase superfamily. MenG/UbiE family.

The enzyme catalyses a 2-demethylmenaquinol + S-adenosyl-L-methionine = a menaquinol + S-adenosyl-L-homocysteine + H(+). The catalysed reaction is a 2-methoxy-6-(all-trans-polyprenyl)benzene-1,4-diol + S-adenosyl-L-methionine = a 5-methoxy-2-methyl-3-(all-trans-polyprenyl)benzene-1,4-diol + S-adenosyl-L-homocysteine + H(+). It functions in the pathway quinol/quinone metabolism; menaquinone biosynthesis; menaquinol from 1,4-dihydroxy-2-naphthoate: step 2/2. The protein operates within cofactor biosynthesis; ubiquinone biosynthesis. Functionally, methyltransferase required for the conversion of demethylmenaquinol (DMKH2) to menaquinol (MKH2) and the conversion of 2-polyprenyl-6-methoxy-1,4-benzoquinol (DDMQH2) to 2-polyprenyl-3-methyl-6-methoxy-1,4-benzoquinol (DMQH2). In Francisella tularensis subsp. tularensis (strain FSC 198), this protein is Ubiquinone/menaquinone biosynthesis C-methyltransferase UbiE.